We begin with the raw amino-acid sequence, 187 residues long: Bifunctional protein PyrR (187 aa).

The short motif at 109-121 (VILVDDVLYSGRS) is the PRPP-binding element.

The protein belongs to the purine/pyrimidine phosphoribosyltransferase family. PyrR subfamily.

The enzyme catalyses UMP + diphosphate = 5-phospho-alpha-D-ribose 1-diphosphate + uracil. Its function is as follows. Regulates the transcription of the pyrimidine nucleotide (pyr) operon in response to exogenous pyrimidines. In terms of biological role, also displays a weak uracil phosphoribosyltransferase activity which is not physiologically significant. This is Bifunctional protein PyrR from Mycobacterium ulcerans (strain Agy99).